The following is a 333-amino-acid chain: 4-hydroxyproline epimerase (333 aa).

The Proton acceptor role is filled by Cys90. Substrate-binding positions include 91 to 92 and Asp249; that span reads GH. Cys253 (proton donor) is an active-site residue. Residue 254–255 coordinates substrate; sequence GT.

Belongs to the proline racemase family. Homodimer.

The enzyme catalyses trans-4-hydroxy-L-proline = cis-4-hydroxy-D-proline. With respect to regulation, inhibited by iodoacetate, iodoacetamide and by high amounts (10 mM) of pyrrole-2-carboxylic acid (PYC). Not inhibited by PYC at 1 mM. In terms of biological role, allows intracellular utilization of 4-hydroxyproline, one of the major constituents of host collagen, by converting 4-hydroxy-L-proline to 4-hydroxy-D-proline, which can be further metabolized by intracellular 4-hydroxy-D-proline oxidases. Strong B-cell mitogen. Plays an important role in the regulation of intra- and extracellular amino acid pools, allowing the bacterium to profit from host precursors and enzymatic pathways. This chain is 4-hydroxyproline epimerase, found in Brucella melitensis biotype 1 (strain ATCC 23456 / CCUG 17765 / NCTC 10094 / 16M).